A 181-amino-acid chain; its full sequence is HGPRTase-like protein 2 (181 aa).

It belongs to the purine/pyrimidine phosphoribosyltransferase family. Archaeal HPRT subfamily.

May catalyze a purine salvage reaction, the substrate is unknown. The chain is HGPRTase-like protein 2 from Haloferax volcanii (strain ATCC 29605 / DSM 3757 / JCM 8879 / NBRC 14742 / NCIMB 2012 / VKM B-1768 / DS2) (Halobacterium volcanii).